We begin with the raw amino-acid sequence, 81 residues long: Tissue- and phase-specific nuclear protein (81 aa).

As to expression, expressed in oviduct, where expression levels are higher in uterine sections than in tuba sections. No expression detected in small intestine and liver (at protein level).

The protein localises to the nucleus. This chain is Tissue- and phase-specific nuclear protein, found in Podarcis siculus (Italian wall lizard).